We begin with the raw amino-acid sequence, 205 residues long: Urease accessory protein UreE (205 aa).

The segment at 171-205 is disordered; that stretch reads AHEAHPHAHSHAGGHGHVHSGHGHGGKHGEHDAES. A compositionally biased stretch (basic residues) spans 177–196; sequence HAHSHAGGHGHVHSGHGHGG.

It belongs to the UreE family.

It is found in the cytoplasm. Its function is as follows. Involved in urease metallocenter assembly. Binds nickel. Probably functions as a nickel donor during metallocenter assembly. The sequence is that of Urease accessory protein UreE from Bordetella parapertussis (strain 12822 / ATCC BAA-587 / NCTC 13253).